The sequence spans 845 residues: Protein translocase subunit SecA (845 aa).

ATP-binding positions include glutamine 88, 106-110, and aspartate 495; that span reads GEGKT. The interval 804–838 is disordered; the sequence is SNRANRPQKKAKRQPIVKPDKPGRNDPCPCGSGKK. Over residues 809–818 the composition is skewed to basic residues; the sequence is RPQKKAKRQP. The Zn(2+) site is built by cysteine 831, cysteine 833, cysteine 842, and cysteine 843.

Belongs to the SecA family. As to quaternary structure, monomer and homodimer. Part of the essential Sec protein translocation apparatus which comprises SecA, SecYEG and auxiliary proteins SecDF. Other proteins may also be involved. Zn(2+) serves as cofactor.

It is found in the cell inner membrane. Its subcellular location is the cytoplasm. It carries out the reaction ATP + H2O + cellular proteinSide 1 = ADP + phosphate + cellular proteinSide 2.. Functionally, part of the Sec protein translocase complex. Interacts with the SecYEG preprotein conducting channel. Has a central role in coupling the hydrolysis of ATP to the transfer of proteins into and across the cell membrane, serving as an ATP-driven molecular motor driving the stepwise translocation of polypeptide chains across the membrane. This Halothermothrix orenii (strain H 168 / OCM 544 / DSM 9562) protein is Protein translocase subunit SecA.